The chain runs to 86 residues: Protein Tat (86 aa).

An interaction with human CREBBP region spans residues 1-24 (MDPVDPNQEPWNHPGSQPRTACNN). The segment at 1-48 (MDPVDPNQEPWNHPGSQPRTACNNCYCKKCCYHCQLCFLKKGLGIYYG) is transactivation. Zn(2+)-binding residues include C22, C25, and C27. A cysteine-rich region spans residues 22–37 (CNNCYCKKCCYHCQLC). N6-acetyllysine; by host PCAF is present on K28. C30, H33, C34, and C37 together coordinate Zn(2+). Positions 38 to 48 (FLKKGLGIYYG) are core. Positions 48–58 (GRKKRRQRRGT) are enriched in basic residues. Residues 48-86 (GRKKRRQRRGTPKSLQDHQTLIPKQPLSRTSGDPTGPEK) are disordered. The short motif at 49 to 57 (RKKRRQRRG) is the Nuclear localization signal, RNA-binding (TAR), and protein transduction element. The tract at residues 49 to 86 (RKKRRQRRGTPKSLQDHQTLIPKQPLSRTSGDPTGPEK) is interaction with the host capping enzyme RNGTT. An N6-acetyllysine; by host EP300 and GCN5L2 mark is found at K50 and K51. Asymmetric dimethylarginine; by host PRMT6 is present on residues R52 and R53. K71 is covalently cross-linked (Glycyl lysine isopeptide (Lys-Gly) (interchain with G-Cter in ubiquitin)).

The protein belongs to the lentiviruses Tat family. In terms of assembly, interacts with host CCNT1. Associates with the P-TEFb complex composed at least of Tat, P-TEFb (CDK9 and CCNT1), TAR RNA, RNA Pol II. Recruits the HATs CREBBP, TAF1/TFIID, EP300, PCAF and GCN5L2. Interacts with host KAT5/Tip60; this interaction targets the latter to degradation. Interacts with the host deacetylase SIRT1. Interacts with host capping enzyme RNGTT; this interaction stimulates RNGTT. Binds to host KDR, and to the host integrins ITGAV/ITGB3 and ITGA5/ITGB1. Interacts with host KPNB1/importin beta-1 without previous binding to KPNA1/importin alpha-1. Interacts with EIF2AK2. Interacts with host nucleosome assembly protein NAP1L1; this interaction may be required for the transport of Tat within the nucleus, since the two proteins interact at the nuclear rim. Interacts with host C1QBP/SF2P32; this interaction involves lysine-acetylated Tat. Interacts with the host chemokine receptors CCR2, CCR3 and CXCR4. Interacts with host DPP4/CD26; this interaction may trigger an anti-proliferative effect. Interacts with host LDLR. Interacts with the host extracellular matrix metalloproteinase MMP1. Interacts with host PRMT6; this interaction mediates Tat's methylation. Interacts with, and is ubiquitinated by MDM2/Hdm2. Interacts with host PSMC3 and HTATIP2. Interacts with STAB1; this interaction may overcome SATB1-mediated repression of IL2 and IL2RA (interleukin) in T cells by binding to the same domain than HDAC1. Interacts (when acetylated) with human CDK13, thereby increasing HIV-1 mRNA splicing and promoting the production of the doubly spliced HIV-1 protein Nef. Interacts with host TBP; this interaction modulates the activity of transcriptional pre-initiation complex. Interacts with host RELA. Interacts with host PLSCR1; this interaction negatively regulates Tat transactivation activity by altering its subcellular distribution. Post-translationally, asymmetrical arginine methylation by host PRMT6 seems to diminish the transactivation capacity of Tat and affects the interaction with host CCNT1. In terms of processing, acetylation by EP300, CREBBP, GCN5L2/GCN5 and PCAF regulates the transactivation activity of Tat. EP300-mediated acetylation of Lys-50 promotes dissociation of Tat from the TAR RNA through the competitive binding to PCAF's bromodomain. In addition, the non-acetylated Tat's N-terminus can also interact with PCAF. PCAF-mediated acetylation of Lys-28 enhances Tat's binding to CCNT1. Lys-50 is deacetylated by SIRT1. Polyubiquitination by host MDM2 does not target Tat to degradation, but activates its transactivation function and fosters interaction with CCNT1 and TAR RNA. Post-translationally, phosphorylated by EIF2AK2 on serine and threonine residues adjacent to the basic region important for TAR RNA binding and function. Phosphorylation of Tat by EIF2AK2 is dependent on the prior activation of EIF2AK2 by dsRNA.

It is found in the host nucleus. It localises to the host nucleolus. The protein resides in the host cytoplasm. The protein localises to the secreted. In terms of biological role, transcriptional activator that increases RNA Pol II processivity, thereby increasing the level of full-length viral transcripts. Recognizes a hairpin structure at the 5'-LTR of the nascent viral mRNAs referred to as the transactivation responsive RNA element (TAR) and recruits the cyclin T1-CDK9 complex (P-TEFb complex) that will in turn hyperphosphorylate the RNA polymerase II to allow efficient elongation. The CDK9 component of P-TEFb and other Tat-activated kinases hyperphosphorylate the C-terminus of RNA Pol II that becomes stabilized and much more processive. Other factors such as HTATSF1/Tat-SF1, SUPT5H/SPT5, and HTATIP2 are also important for Tat's function. Besides its effect on RNA Pol II processivity, Tat induces chromatin remodeling of proviral genes by recruiting the histone acetyltransferases (HATs) CREBBP, EP300 and PCAF to the chromatin. This also contributes to the increase in proviral transcription rate, especially when the provirus integrates in transcriptionally silent region of the host genome. To ensure maximal activation of the LTR, Tat mediates nuclear translocation of NF-kappa-B by interacting with host RELA. Through its interaction with host TBP, Tat may also modulate transcription initiation. Tat can reactivate a latently infected cell by penetrating in it and transactivating its LTR promoter. In the cytoplasm, Tat is thought to act as a translational activator of HIV-1 mRNAs. Extracellular circulating Tat can be endocytosed by surrounding uninfected cells via the binding to several surface receptors such as CD26, CXCR4, heparan sulfate proteoglycans (HSPG) or LDLR. Neurons are rarely infected, but they internalize Tat via their LDLR. Through its interaction with nuclear HATs, Tat is potentially able to control the acetylation-dependent cellular gene expression. Modulates the expression of many cellular genes involved in cell survival, proliferation or in coding for cytokines or cytokine receptors. Tat plays a role in T-cell and neurons apoptosis. Tat induced neurotoxicity and apoptosis probably contribute to neuroAIDS. Circulating Tat also acts as a chemokine-like and/or growth factor-like molecule that binds to specific receptors on the surface of the cells, affecting many cellular pathways. In the vascular system, Tat binds to ITGAV/ITGB3 and ITGA5/ITGB1 integrins dimers at the surface of endothelial cells and competes with bFGF for heparin-binding sites, leading to an excess of soluble bFGF. In Human immunodeficiency virus type 1 group M subtype H (isolate VI991) (HIV-1), this protein is Protein Tat.